The primary structure comprises 336 residues: MDVASLISPSESDTVPTFRSRSIQNSSASHYKRLSEQSTGSYFSAVPTHTTSYSRTPQPPLSPPAEDQSKCSLPSISILLENADGAAAHAAKRQRNSLSTHRDSDPRPPYDSITPHAMPPTPPLRPGSGFHSNGHSPSTSSVSAASSSALMKNTESYPQAPIGLPSPTDRSSISSQGSVQHAASAPYASPAPSVSSFSSPIEPSTPSTAAYYQRNPAPNTFQNPSPFPQTSTASLPSPGHQQMISPVTPAWQHHHYFPPSSSTSYQQNHDRYICRTCHKAFSRPSSLRIHSHSHTGEKPFRCTHAGCGKAFSVRSNMKRHERGCHTGRPVATAMVQ.

The segment at 1-245 (MDVASLISPS…PSPGHQQMIS (245 aa)) is disordered. 2 stretches are compositionally biased toward polar residues: residues 7–29 (ISPS…SSAS) and 36–56 (EQST…YSRT). Residues 136–149 (SPSTSSVSAASSSA) are compositionally biased toward low complexity. The segment covering 168–181 (TDRSSISSQGSVQH) has biased composition (polar residues). Over residues 182 to 210 (AASAPYASPAPSVSSFSSPIEPSTPSTAA) the composition is skewed to low complexity. Over residues 216–245 (PAPNTFQNPSPFPQTSTASLPSPGHQQMIS) the composition is skewed to polar residues. 2 consecutive C2H2-type zinc fingers follow at residues 272-294 (YICR…SHSH) and 300-325 (FRCT…RGCH).

The protein resides in the nucleus. In terms of biological role, transcription factor that controls morphogenesis and virulence. Acts as a positive regulator of gliotixin and protease production. This is C2H2 finger domain transcription factor mtfA from Aspergillus fumigatus (strain CBS 144.89 / FGSC A1163 / CEA10) (Neosartorya fumigata).